A 135-amino-acid polypeptide reads, in one-letter code: D-ribose pyranase (135 aa).

H20 serves as the catalytic Proton donor. Residues D28, H102, and 124-126 (YSN) each bind substrate.

It belongs to the RbsD / FucU family. RbsD subfamily. In terms of assembly, homodecamer.

The protein resides in the cytoplasm. The catalysed reaction is beta-D-ribopyranose = beta-D-ribofuranose. It functions in the pathway carbohydrate metabolism; D-ribose degradation; D-ribose 5-phosphate from beta-D-ribopyranose: step 1/2. Functionally, catalyzes the interconversion of beta-pyran and beta-furan forms of D-ribose. The polypeptide is D-ribose pyranase (Thermotoga petrophila (strain ATCC BAA-488 / DSM 13995 / JCM 10881 / RKU-1)).